The primary structure comprises 386 residues: ADP,ATP carrier protein, mitochondrial (386 aa).

A mitochondrion-targeting transit peptide spans 1–76 (ADNQHPTVYQ…ANASPVFVQA (76 aa)). 3 Solcar repeats span residues 83-176 (AAFA…FKRL), 188-281 (KWFA…LKPV), and 289-375 (DSFF…LQVI). 5 helical membrane-spanning segments follow: residues 85 to 112 (FATD…VKLL), 153 to 177 (TANV…KRLF), 186 to 206 (YWKW…SSLL), 257 to 278 (FNIS…YDSL), and 292 to 312 (FASF…SYPI). ADP-binding residues include R158 and K170. Position 316 (R316) interacts with ADP. Residues 316-321 (RRRMMM) form an important for transport activity region. Positions 316–321 (RRRMMM) match the Nucleotide carrier signature motif motif. Residues 352-372 (AGANVLRAVAGAGVLAGYDKL) form a helical membrane-spanning segment.

It belongs to the mitochondrial carrier (TC 2.A.29) family. Monomer.

It localises to the mitochondrion inner membrane. It carries out the reaction ADP(in) + ATP(out) = ADP(out) + ATP(in). The matrix-open state (m-state) is inhibited by the membrane-permeable bongkrekic acid (BKA). The cytoplasmic-open state (c-state) is inhibited by the membrane-impermeable toxic inhibitor carboxyatractyloside (CATR). Functionally, ADP:ATP antiporter that mediates import of ADP into the mitochondrial matrix for ATP synthesis, and export of ATP out to fuel the cell. Cycles between the cytoplasmic-open state (c-state) and the matrix-open state (m-state): operates by the alternating access mechanism with a single substrate-binding site intermittently exposed to either the cytosolic (c-state) or matrix (m-state) side of the inner mitochondrial membrane. The sequence is that of ADP,ATP carrier protein, mitochondrial (ANT1) from Solanum tuberosum (Potato).